The primary structure comprises 197 residues: Probable nicotinate-nucleotide adenylyltransferase (197 aa).

Belongs to the NadD family.

The catalysed reaction is nicotinate beta-D-ribonucleotide + ATP + H(+) = deamido-NAD(+) + diphosphate. It participates in cofactor biosynthesis; NAD(+) biosynthesis; deamido-NAD(+) from nicotinate D-ribonucleotide: step 1/1. Its function is as follows. Catalyzes the reversible adenylation of nicotinate mononucleotide (NaMN) to nicotinic acid adenine dinucleotide (NaAD). This chain is Probable nicotinate-nucleotide adenylyltransferase, found in Porphyromonas gingivalis (strain ATCC 33277 / DSM 20709 / CIP 103683 / JCM 12257 / NCTC 11834 / 2561).